The primary structure comprises 319 residues: tRNA uridine(34) hydroxylase (319 aa).

The Rhodanese domain maps to 127–221; that stretch reads KQEDTVIIDA…YGKDPEVQGE (95 aa). The active-site Cysteine persulfide intermediate is the Cys-181.

It belongs to the TrhO family.

The catalysed reaction is uridine(34) in tRNA + AH2 + O2 = 5-hydroxyuridine(34) in tRNA + A + H2O. Catalyzes oxygen-dependent 5-hydroxyuridine (ho5U) modification at position 34 in tRNAs. The chain is tRNA uridine(34) hydroxylase from Bacillus cereus (strain G9842).